The primary structure comprises 326 residues: ATP synthase subunit gamma, mitochondrial (326 aa).

The N-terminal 45 residues, 1-45, are a transit peptide targeting the mitochondrion; that stretch reads MAMAALRREGRRLAAAPFTSPTPLNALRSSLVSPSEEIGLSGVRS.

This sequence belongs to the ATPase gamma chain family. As to quaternary structure, F-type ATPases have 2 components, CF(1) - the catalytic core - and CF(0) - the membrane proton channel. CF(1) has five subunits: alpha(3), beta(3), gamma(1), delta(1), epsilon(1). CF(0) has three main subunits: a, b and c.

The protein resides in the mitochondrion. Its subcellular location is the mitochondrion inner membrane. In terms of biological role, mitochondrial membrane ATP synthase (F(1)F(0) ATP synthase or Complex V) produces ATP from ADP in the presence of a proton gradient across the membrane which is generated by electron transport complexes of the respiratory chain. F-type ATPases consist of two structural domains, F(1) - containing the extramembraneous catalytic core, and F(0) - containing the membrane proton channel, linked together by a central stalk and a peripheral stalk. During catalysis, ATP synthesis in the catalytic domain of F(1) is coupled via a rotary mechanism of the central stalk subunits to proton translocation. Part of the complex F(1) domain and the central stalk which is part of the complex rotary element. The gamma subunit protrudes into the catalytic domain formed of alpha(3)beta(3). Rotation of the central stalk against the surrounding alpha(3)beta(3) subunits leads to hydrolysis of ATP in three separate catalytic sites on the beta subunits. The chain is ATP synthase subunit gamma, mitochondrial (ATPC) from Ipomoea batatas (Sweet potato).